Consider the following 402-residue polypeptide: Advanced glycosylation end product-specific receptor (402 aa).

An N-terminal signal peptide occupies residues 1 to 22 (MPAGTAARAWVLVLALWGAVAG). Residues 23–109 (GQNITARIGE…ATNRRGKEVK (87 aa)) enclose the Ig-like V-type domain. The Extracellular segment spans residues 23 to 340 (GQNITARIGE…VGESGLGTLA (318 aa)). Residues Asn-25 and Asn-80 are each glycosylated (N-linked (GlcNAc...) asparagine). Disulfide bonds link Cys-38/Cys-98 and Cys-143/Cys-206. 2 consecutive Ig-like C2-type domains span residues 123–219 (PEIV…RPLN) and 233–315 (PEGI…PPVS). A disordered region spans residues 295–332 (GTYSCVATHPSHGPQESPPVSIRVTETGDEGPAEGSVG). A helical transmembrane segment spans residues 341 to 361 (LALGILGGLGVVALLVGAILW). The Cytoplasmic portion of the chain corresponds to 362–402 (RKRQPRREERKAPESQEDEEERAELNQSEEAEMPENGAGGP). Residues 365–402 (QPRREERKAPESQEDEEERAELNQSEEAEMPENGAGGP) are disordered. A phosphoserine; by ATM mark is found at Ser-376 and Ser-389. Residues 376-394 (SQEDEEERAELNQSEEAEM) are compositionally biased toward acidic residues.

In terms of assembly, constitutive homodimer; disulfide-linked. Forms homooligomers. Interacts with S100A1 and APP. Interacts with S100B, S100A12 and S100A14. Interacts with TIRAP. Interacts with HMGB1. Interacts with LGP2; this interaction plays an important role in AGER-mediated pro-inflammatory responses and cytokine release. Interacts with double-strand break repair protein MRE11 which is a core component of the MRN complex; the interaction enhances MRE11 endonuclease activity and promotes DNA repair. Interacts with the MCM2-7 complex via interaction with complex member MCM2; the interaction is increased following DNA replication stress and stabilizes the MCM2-7 complex at replication forks. Post-translationally, phosphorylated on its cytoplasmic domain by PKCzeta/PRKCZ upon ligand binding. Phosphorylated by ATM following DNA damage. In terms of processing, targeted by the ubiquitin E3 ligase subunit FBXO10 to mediate its ubiquitination and degradation. In terms of tissue distribution, isoform 1: Expressed at higher levels in the coronary arterioles in type 2 diabetic mice (at protein level). Endothelial cells. Expressed in lung, kidney, brain and heart. Most prevalent isoform with the highest level in heart. Isoform 2: Expressed in brain, lung, kidney and small intestine with the highest level in lung. Expressed in brain, lung, kidney and small intestine with the highest level in small intestine (at protein level). Detected in neurons of the cerebrum, bronchial epithelium, endothelial cells, tubular cells of kidney and epithelial cells of small intestine (at protein level). Expression is increased in the kidney of diabetic wild-type mice (at protein level), but not in the other tissues. Expressed only in kidney. Expression is increased in the kidney of diabetic mice. Isoform 3: Expressed in lung, kidney and heart. The second most prevalent isoform with the highest level in lung. Not expressed in brain. Isoform 4: Expressed at very low level in lung only. Isoform 5: Expressed at very low level in lung only. Isoform 6: Expressed at very low level in lung only. Isoform 7: Expressed at very low level in heart only. Isoform 8: Expressed at very low level in lung only. Isoform 9: Expressed at very low level in heart only. Isoform 10: Expressed in lung, brain, heart and kidney with a very high level in kidney. Isoform 11: Expressed in brain, kidney and heart. Not expressed in lung. Isoform 12: Expressed at very low level in lung and kidney. Isoform 13: Expressed at very low level in lung only.

Its subcellular location is the cell membrane. The protein localises to the cell projection. It is found in the phagocytic cup. It localises to the early endosome. The protein resides in the nucleus. Its subcellular location is the secreted. In terms of biological role, cell surface pattern recognition receptor that senses endogenous stress signals with a broad ligand repertoire including advanced glycation end products, S100 proteins, high-mobility group box 1 protein/HMGB1, amyloid beta/APP oligomers, nucleic acids, histones, phospholipids and glycosaminoglycans. Advanced glycosylation end products are nonenzymatically glycosylated proteins which accumulate in vascular tissue in aging and at an accelerated rate in diabetes. These ligands accumulate at inflammatory sites during the pathogenesis of various diseases including diabetes, vascular complications, neurodegenerative disorders and cancers, and RAGE transduces their binding into pro-inflammatory responses. Upon ligand binding, uses TIRAP and MYD88 as adapters to transduce the signal ultimately leading to the induction of inflammatory cytokines IL6, IL8 and TNFalpha through activation of NF-kappa-B. Interaction with S100A12 on endothelium, mononuclear phagocytes, and lymphocytes triggers cellular activation, with generation of key pro-inflammatory mediators. Interaction with S100B after myocardial infarction may play a role in myocyte apoptosis by activating ERK1/2 and p53/TP53 signaling. Contributes to the translocation of amyloid-beta peptide (ABPP) across the cell membrane from the extracellular to the intracellular space in cortical neurons. ABPP-initiated RAGE signaling, especially stimulation of p38 mitogen-activated protein kinase (MAPK), has the capacity to drive a transport system delivering ABPP as a complex with RAGE to the intraneuronal space. Participates in endothelial albumin transcytosis together with HMGB1 through the RAGE/SRC/Caveolin-1 pathway, leading to endothelial hyperpermeability. Mediates the loading of HMGB1 in extracellular vesicles (EVs) that shuttle HMGB1 to hepatocytes by transferrin-mediated endocytosis and subsequently promote hepatocyte pyroptosis by activating the NLRP3 inflammasome. Binds to DNA and promotes extracellular hypomethylated DNA (CpG DNA) uptake by cells via the endosomal route to activate inflammatory responses. Mediates phagocytosis by non-professional phagocytes (NPP) and this is enhanced by binding to ligands including RNA, DNA, HMGB1 and histones. Promotes NPP-mediated phagocytosis of Saccharomyces cerevisiae spores by binding to RNA attached to the spore wall. Also promotes NPP-mediated phagocytosis of apoptotic cells. Following DNA damage, recruited to DNA double-strand break sites where it colocalizes with the MRN repair complex via interaction with double-strand break repair protein MRE11. Enhances the endonuclease activity of MRE11, promoting the end resection of damaged DNA. Promotes DNA damage repair in trophoblasts which enhances trophoblast invasion and contributes to placental development and maintenance. Protects cells from DNA replication stress by localizing to damaged replication forks where it stabilizes the MCM2-7 complex and promotes faithful progression of the replication fork. Its function is as follows. Is able to advanced glycosylation end product (AGE)-induce nuclear factor NF-kappa-B activation. Functionally, down-regulates receptor for advanced glycosylation end products (RAGE)-ligand induced signaling through various MAPK pathways including ERK1/2, p38 and SAPK/JNK. Significantly affects tumor cell properties through decreasing cell migration, invasion, adhesion and proliferation, and increasing cellular apoptosis. Exhibits drastic inhibition on tumorigenesis in vitro. This chain is Advanced glycosylation end product-specific receptor (Ager), found in Mus musculus (Mouse).